Here is a 357-residue protein sequence, read N- to C-terminus: MPTYNFAAGPATLPRPVLEQVQRELLDYQGSQVSILEISHRSPVFREIYQQAKERLLQLMGLSADEYTPLFLQGGGTLQFTMVPLNLARDHHRVAYADTGHWSARAIEEAKKLPDLTVDVVTEAGPDFAHIPAVPDLPADTYDYLHITTNNTIMGLAYQDLPQTAVLLVGDLSSNFLGQAYDFSSFDLIYAGAQKNLAPAGVTIVVVKNDYLTEDHGLPSMLNYPALAKKESALNTPPVFQIYFANLVLKWLKEQGGVQAMDELNRQKAGLVYDYLDQSKLFSNRVAPDSRSLTNIPFTTGKADLDQRFIKEAAAAGLVNLKGHRLVGGMRASLYNAMPLAGAVALRDFMHQFEQEI.

Arginine 41 is an L-glutamate binding site. Residues 76-77, tryptophan 102, threonine 152, aspartate 171, and glutamine 194 each bind pyridoxal 5'-phosphate; that span reads GT. Lysine 195 carries the N6-(pyridoxal phosphate)lysine modification. A pyridoxal 5'-phosphate-binding site is contributed by 235–236; that stretch reads NT.

The protein belongs to the class-V pyridoxal-phosphate-dependent aminotransferase family. SerC subfamily. As to quaternary structure, homodimer. Pyridoxal 5'-phosphate serves as cofactor.

The protein localises to the cytoplasm. It carries out the reaction O-phospho-L-serine + 2-oxoglutarate = 3-phosphooxypyruvate + L-glutamate. It catalyses the reaction 4-(phosphooxy)-L-threonine + 2-oxoglutarate = (R)-3-hydroxy-2-oxo-4-phosphooxybutanoate + L-glutamate. The protein operates within amino-acid biosynthesis; L-serine biosynthesis; L-serine from 3-phospho-D-glycerate: step 2/3. In terms of biological role, catalyzes the reversible conversion of 3-phosphohydroxypyruvate to phosphoserine and of 3-hydroxy-2-oxo-4-phosphonooxybutanoate to phosphohydroxythreonine. In Limosilactobacillus fermentum (strain NBRC 3956 / LMG 18251) (Lactobacillus fermentum), this protein is Phosphoserine aminotransferase.